Consider the following 94-residue polypeptide: Small ribosomal subunit protein uS19 (94 aa).

Belongs to the universal ribosomal protein uS19 family.

In terms of biological role, protein S19 forms a complex with S13 that binds strongly to the 16S ribosomal RNA. The sequence is that of Small ribosomal subunit protein uS19 from Dictyoglomus thermophilum (strain ATCC 35947 / DSM 3960 / H-6-12).